We begin with the raw amino-acid sequence, 184 residues long: Peptidoglycan-recognition protein SC2 (184 aa).

The N-terminal stretch at 1–20 (MANKALILLAVLFCAQAVLG) is a signal peptide. Residues 45-169 (SYAVIHHTAG…RQVGSTECPG (125 aa)) form the N-acetylmuramoyl-L-alanine amidase domain. Position 50 (histidine 50) interacts with Zn(2+). Cysteine 57 and cysteine 63 are joined by a disulfide. Zn(2+) contacts are provided by histidine 159 and cysteine 167.

It belongs to the N-acetylmuramoyl-L-alanine amidase 2 family. The cofactor is Zn(2+). Constitutively expressed at high level in gut, in addition to the induced expression in fat body.

It is found in the secreted. The enzyme catalyses Hydrolyzes the link between N-acetylmuramoyl residues and L-amino acid residues in certain cell-wall glycopeptides.. In terms of biological role, N-acetylmuramyl-L-alanine amidase involved in innate immunity by degrading bacterial peptidoglycans (PGN). Probably plays a scavenger role by digesting biologically active PGN into biologically inactive fragments. Has no direct bacteriolytic activity. The polypeptide is Peptidoglycan-recognition protein SC2 (PGRP-SC2) (Drosophila melanogaster (Fruit fly)).